A 121-amino-acid chain; its full sequence is uncharacterized protein (121 aa).

This is an uncharacterized protein from Schizosaccharomyces pombe (strain 972 / ATCC 24843) (Fission yeast).